Here is a 121-residue protein sequence, read N- to C-terminus: Large ribosomal subunit protein bL12 (121 aa).

It belongs to the bacterial ribosomal protein bL12 family. Homodimer. Part of the ribosomal stalk of the 50S ribosomal subunit. Forms a multimeric L10(L12)X complex, where L10 forms an elongated spine to which 2 to 4 L12 dimers bind in a sequential fashion. Binds GTP-bound translation factors.

Functionally, forms part of the ribosomal stalk which helps the ribosome interact with GTP-bound translation factors. Is thus essential for accurate translation. The sequence is that of Large ribosomal subunit protein bL12 from Salmonella agona (strain SL483).